The chain runs to 255 residues: Uracil-DNA glycosylase (255 aa).

D93 functions as the Proton acceptor in the catalytic mechanism.

The protein belongs to the uracil-DNA glycosylase (UDG) superfamily. UNG family.

The protein resides in the host nucleus. It carries out the reaction Hydrolyzes single-stranded DNA or mismatched double-stranded DNA and polynucleotides, releasing free uracil.. Functionally, excises uracil residues from the DNA which can arise as a result of misincorporation of dUMP residues by DNA polymerase or deamination of cytosines. Therefore may reduce deleterious uracil incorporation into the viral genome, particularly in terminally differentiated cells which lack DNA repair enzymes. In Human herpesvirus 6A (strain Uganda-1102) (HHV-6 variant A), this protein is Uracil-DNA glycosylase (U81).